The sequence spans 579 residues: Cytochrome P450 monooxygenase prx9 (579 aa).

The helical transmembrane segment at 6–25 (LPLGSFVGTTLLLFILYKLV) threads the bilayer. N-linked (GlcNAc...) asparagine glycosylation is found at Asn194, Asn292, and Asn390. Cys512 contributes to the heme binding site.

The protein belongs to the cytochrome P450 family. Heme serves as cofactor.

Its subcellular location is the membrane. Its pathway is sesquiterpene biosynthesis. Its function is as follows. Cytochrome P450 monooxygenase; part of the gene cluster that mediates the biosynthesis of PR-toxin, a bicyclic sesquiterpene belonging to the eremophilane class and acting as a mycotoxin. The first step of the pathway is catalyzed by the aristolochene synthase which performs the cyclization of trans,trans-farnesyl diphosphate (FPP) to the bicyclic sesquiterpene aristolochene. Following the formation of aristolochene, the non-oxygenated aristolochene is converted to the trioxygenated intermediate eremofortin B, via 7-epi-neopetasone. This conversion appears to involve three enzymes, a hydroxysterol oxidase-like enzyme, the quinone-oxidase prx3 that forms the quinone-type-structure in the bicyclic nucleus of aristolochene with the C8-oxo group and the C-3 hydroxyl group, and the P450 monooxygenase prx9 that introduces the epoxide at the double bond between carbons 1 and 2. No monoxy or dioxy-intermediates have been reported to be released to the broth, so these three early oxidative reactions may be coupled together. Eremofortin B is further oxidized by another P450 monooxygenase, that introduces a second epoxide between carbons 7 and 11 prior to acetylation to eremofortin A by the acetyltransferase prx11. The second epoxidation may be performed by a second P450 monooxygenase. After the acetylation step, eremofortin A is converted to eremofortin C and then to PR-toxin. First the conversion of eremofortin A to eremofortin C proceeds by oxidation of the side chain of the molecule at C-12 and is catalyzed by the short-chain oxidoreductase prx1. The cytochrome P450 monooxygenase prx8 also plays a role in this step. The primary alcohol formed at C-12 is finally oxidized by the short-chain alcohol dehydrogenase prx4 that forms PR-toxin. This chain is Cytochrome P450 monooxygenase prx9, found in Penicillium rubens (strain ATCC 28089 / DSM 1075 / NRRL 1951 / Wisconsin 54-1255) (Penicillium chrysogenum).